Reading from the N-terminus, the 124-residue chain is Large ribosomal subunit protein bL12 (124 aa).

The protein belongs to the bacterial ribosomal protein bL12 family. As to quaternary structure, homodimer. Part of the ribosomal stalk of the 50S ribosomal subunit. Forms a multimeric L10(L12)X complex, where L10 forms an elongated spine to which 2 to 4 L12 dimers bind in a sequential fashion. Binds GTP-bound translation factors.

Forms part of the ribosomal stalk which helps the ribosome interact with GTP-bound translation factors. Is thus essential for accurate translation. This chain is Large ribosomal subunit protein bL12, found in Campylobacter fetus subsp. fetus (strain 82-40).